Reading from the N-terminus, the 518-residue chain is Putative transposase for insertion sequence IS408 (518 aa).

An HTH IS408-type domain is found at 11-94 (LKEVLRLKWA…PDYTALHREL (84 aa)). A DNA-binding region (H-T-H motif) is located at residues 23-44 (LTHRQISRAIGISVGAVSKFAA). An Integrase catalytic domain is found at 140 to 335 (QQHRAGEKLF…LPVRRYEIAT (196 aa)). The segment at 496–518 (LPTTPAEWRSPEHENVRGPDYYH) is disordered. A compositionally biased stretch (basic and acidic residues) spans 504-518 (RSPEHENVRGPDYYH).

Belongs to the transposase IS21/IS408/IS1162 family.

Its function is as follows. Required for the transposition of the insertion element. This Burkholderia multivorans (strain ATCC 17616 / 249) protein is Putative transposase for insertion sequence IS408.